Reading from the N-terminus, the 449-residue chain is Biotin carboxylase (449 aa).

The 445-residue stretch at 4 to 448 folds into the Biotin carboxylation domain; the sequence is MIEKVLIANR…NIHYLEKMLG (445 aa). ATP is bound by residues lysine 119, lysine 162, 168 to 169, 204 to 207, histidine 212, and histidine 239; these read GG and EKYL. Positions 123–320 constitute an ATP-grasp domain; the sequence is IAAMKAAGVP…IVKEQILIAA (198 aa). Lysine 241 provides a ligand contact to hydrogencarbonate. ATP-binding residues include glutamate 279 and glutamate 291. Mg(2+)-binding residues include glutamate 279, glutamate 291, and asparagine 293. Residues glutamate 279, glutamate 291, and asparagine 293 each contribute to the Mn(2+) site. Positions 295, 298, and 341 each coordinate hydrogencarbonate. The active site involves arginine 295. Arginine 341 serves as a coordination point for biotin.

Acetyl-CoA carboxylase is a heterohexamer of biotin carboxyl carrier protein, biotin carboxylase and the two subunits of carboxyl transferase in a 2:2 complex. Requires Mg(2+) as cofactor. It depends on Mn(2+) as a cofactor.

It carries out the reaction N(6)-biotinyl-L-lysyl-[protein] + hydrogencarbonate + ATP = N(6)-carboxybiotinyl-L-lysyl-[protein] + ADP + phosphate + H(+). It participates in lipid metabolism; malonyl-CoA biosynthesis; malonyl-CoA from acetyl-CoA: step 1/1. Functionally, this protein is a component of the acetyl coenzyme A carboxylase complex; first, biotin carboxylase catalyzes the carboxylation of the carrier protein and then the transcarboxylase transfers the carboxyl group to form malonyl-CoA. This Allochromatium vinosum (strain ATCC 17899 / DSM 180 / NBRC 103801 / NCIMB 10441 / D) (Chromatium vinosum) protein is Biotin carboxylase (accC).